The following is a 328-amino-acid chain: Cytochrome c biogenesis protein CcsA (328 aa).

The next 8 membrane-spanning stretches (helical) occupy residues 13-33 (ISFS…LVNL), 46-66 (GIVI…IYSG), 73-93 (LYES…VSYF), 101-121 (LNAI…SGLL), 146-166 (MILG…LLVI), 234-254 (IISL…VWAN), 263-283 (WDPK…YLHI), and 295-315 (AIVA…VNLL).

Belongs to the CcmF/CycK/Ccl1/NrfE/CcsA family. May interact with Ccs1.

The protein localises to the plastid. It localises to the chloroplast thylakoid membrane. Required during biogenesis of c-type cytochromes (cytochrome c6 and cytochrome f) at the step of heme attachment. The polypeptide is Cytochrome c biogenesis protein CcsA (Nasturtium officinale (Watercress)).